The chain runs to 383 residues: NAIADYRTFPLISPLASAASFASGVSVTWADGRVSPFHNLWLRDNCPCGDCVYEVTREQVFLVADVPEDIQVQAVTIGDDGRLVVQWDDGHASAYHPGWLRAHAYDAQSLAEREAARPHKHRWMQGLSLPVYDHGAVMQDDDTLLEWLLAVRDVGLTQLHGVPTEPGALIPLAKRISFIRESNFGVLFDVRSKADADSNAYTAFNLPLHTDLPTRELQPGLQFLHCLVNDATGGNSTFVDGFAIAEALRIEAPAAYRLLCETPVEFRNKDRHSDYRCTAPVIALDSSGEVREIRLANFLRAPFQMDAQRMPDYYLAYRRFIQMTREPRFCFTRRLEAGQLWCFDNRRVLHARDAFDPASGDRHFQGCYVDRDELLSRILVLQR.

Positions 46, 48, 51, and 91 each coordinate Zn(2+). Fe cation contacts are provided by His-209, Asp-211, and His-350.

It belongs to the gamma-BBH/TMLD family. As to quaternary structure, homodimer. The cofactor is Fe(2+). It depends on L-ascorbate as a cofactor.

The protein localises to the cytoplasm. It carries out the reaction 4-(trimethylamino)butanoate + 2-oxoglutarate + O2 = carnitine + succinate + CO2. The protein operates within amine and polyamine biosynthesis; carnitine biosynthesis. Catalyzes the formation of L-carnitine from gamma-butyrobetaine. The sequence is that of Gamma-butyrobetaine dioxygenase from Pseudomonas sp. (strain AK-1).